The primary structure comprises 786 residues: Kazrin-A (786 aa).

The disordered stretch occupies residues 44–70 (EEPGEPQEHQQQQQQQNHQDAPVQRQK). Residues 52 to 62 (HQQQQQQQNHQ) show a composition bias toward low complexity. The stretch at 92–270 (LLHEEVLRLQ…SLATLTKDVP (179 aa)) forms a coiled coil. Residues 350 to 425 (MSDASVMEGE…LFDDSDSLSS (76 aa)) are disordered. 3 consecutive SAM domains span residues 457-522 (WRAG…YRDA), 535-599 (DHHW…LHTL), and 623-686 (WTCQ…SEEM). Residues 703-760 (PLGTPPTLHRQSSLSSSSPSCHDDQQSLRRVKQQLGLSPKNLTARNISHQSRSGSFPR) form a disordered region. The segment covering 742 to 758 (KNLTARNISHQSRSGSF) has biased composition (polar residues).

Belongs to the kazrin family.

This Danio rerio (Zebrafish) protein is Kazrin-A (kazna).